The sequence spans 530 residues: UPF0422 protein lpl2888 (530 aa).

Positions 1–19 are cleaved as a signal peptide; the sequence is MKFKKIILALACLSSPLYA. Positions 20–66 form a coiled coil; sequence DQDQQLKSEIQRLQHQAEDLQAQLNRLQKQLANHKSSQQKHEQQAAT. The disordered stretch occupies residues 50-81; it reads LANHKSSQQKHEQQAATKPAEPQSKPTVKSGA.

Belongs to the UPF0422 family.

The sequence is that of UPF0422 protein lpl2888 from Legionella pneumophila (strain Lens).